A 366-amino-acid chain; its full sequence is UDP-N-acetylglucosamine--N-acetylmuramyl-(pentapeptide) pyrophosphoryl-undecaprenol N-acetylglucosamine transferase (366 aa).

UDP-N-acetyl-alpha-D-glucosamine-binding positions include Thr-10–Gly-12, Asn-124, Arg-166, Ser-196, and Gln-296.

Belongs to the glycosyltransferase 28 family. MurG subfamily.

The protein localises to the cell membrane. The catalysed reaction is di-trans,octa-cis-undecaprenyl diphospho-N-acetyl-alpha-D-muramoyl-L-alanyl-D-glutamyl-meso-2,6-diaminopimeloyl-D-alanyl-D-alanine + UDP-N-acetyl-alpha-D-glucosamine = di-trans,octa-cis-undecaprenyl diphospho-[N-acetyl-alpha-D-glucosaminyl-(1-&gt;4)]-N-acetyl-alpha-D-muramoyl-L-alanyl-D-glutamyl-meso-2,6-diaminopimeloyl-D-alanyl-D-alanine + UDP + H(+). It participates in cell wall biogenesis; peptidoglycan biosynthesis. Functionally, cell wall formation. Catalyzes the transfer of a GlcNAc subunit on undecaprenyl-pyrophosphoryl-MurNAc-pentapeptide (lipid intermediate I) to form undecaprenyl-pyrophosphoryl-MurNAc-(pentapeptide)GlcNAc (lipid intermediate II). The polypeptide is UDP-N-acetylglucosamine--N-acetylmuramyl-(pentapeptide) pyrophosphoryl-undecaprenol N-acetylglucosamine transferase (Alkaliphilus oremlandii (strain OhILAs) (Clostridium oremlandii (strain OhILAs))).